Consider the following 192-residue polypeptide: UPF0301 protein BMA10247_1859 (192 aa).

The protein belongs to the UPF0301 (AlgH) family.

The protein is UPF0301 protein BMA10247_1859 of Burkholderia mallei (strain NCTC 10247).